Consider the following 349-residue polypeptide: UPF0324 inner membrane protein YeiH (349 aa).

At 1-12 the chain is on the periplasmic side; sequence MTNITLQKQHRT. A helical membrane pass occupies residues 13 to 32; the sequence is LWHFIPGLALSAVITGVALW. Topologically, residues 33 to 35 are cytoplasmic; the sequence is GGS. Residues 36-58 traverse the membrane as a helical segment; it reads IPAVAGAGFSALTLAILLGMVLG. The Periplasmic segment spans residues 59 to 99; the sequence is NTIYPHIWKSCDGGVLFAKQYLLRLGIILYGFRLTFSQIAD. The helical transmembrane segment at 100–122 threads the bilayer; sequence VGISGIIIDVLTLSSTFLLACFL. The Cytoplasmic portion of the chain corresponds to 123-131; sequence GQKVFGLDK. The chain crosses the membrane as a helical span at residues 132–151; it reads HTSWLIGAGSSICGAAAVLA. At 152–162 the chain is on the periplasmic side; it reads TEPVVKAEASK. The chain crosses the membrane as a helical span at residues 163–185; the sequence is VTVAVATVVIFGTVAIFLYPAIY. Topologically, residues 186-261 are cytoplasmic; that stretch reads PLMSQWFSPE…SGTNSGEKSK (76 aa). Residues 262–283 form a helical membrane-spanning segment; it reads ITIPWFAILFIVVAIFNSFHLL. Residues 284–289 are Periplasmic-facing; it reads PQSVVN. Residues 290 to 312 traverse the membrane as a helical segment; the sequence is MLVTLDTFLLAMAMAALGLTTHV. Topologically, residues 313–321 are cytoplasmic; that stretch reads SALKKAGAK. Residues 322–344 form a helical membrane-spanning segment; sequence PLLMALVLFAWLIVGGGAINYVI. The Periplasmic portion of the chain corresponds to 345–349; it reads QSVIA.

This sequence belongs to the UPF0324 family.

The protein localises to the cell inner membrane. This is UPF0324 inner membrane protein YeiH (yeiH) from Escherichia coli O6:H1 (strain CFT073 / ATCC 700928 / UPEC).